Here is a 271-residue protein sequence, read N- to C-terminus: Phosphatidylglycerol--prolipoprotein diacylglyceryl transferase (271 aa).

The next 7 membrane-spanning stretches (helical) occupy residues W25–V45, Y60–Y80, F103–L123, W134–G154, P181–A201, G209–Y229, and G235–I255. Residue R152 coordinates a 1,2-diacyl-sn-glycero-3-phospho-(1'-sn-glycerol).

This sequence belongs to the Lgt family.

It is found in the cell inner membrane. It carries out the reaction L-cysteinyl-[prolipoprotein] + a 1,2-diacyl-sn-glycero-3-phospho-(1'-sn-glycerol) = an S-1,2-diacyl-sn-glyceryl-L-cysteinyl-[prolipoprotein] + sn-glycerol 1-phosphate + H(+). It participates in protein modification; lipoprotein biosynthesis (diacylglyceryl transfer). Its function is as follows. Catalyzes the transfer of the diacylglyceryl group from phosphatidylglycerol to the sulfhydryl group of the N-terminal cysteine of a prolipoprotein, the first step in the formation of mature lipoproteins. In Campylobacter jejuni subsp. jejuni serotype O:23/36 (strain 81-176), this protein is Phosphatidylglycerol--prolipoprotein diacylglyceryl transferase.